Reading from the N-terminus, the 437-residue chain is MKSNVEKVSNLSRKLNIEVPAAAVQTAFQKIFNGIQKEVTIKGFRKGKAPLATVKSLYGDRVKQDVVQDLIQKHYAEALNEHKLEPISYPEFEFADPTENKDFSFSAAFDVRPEITLKKYEGLEVEKEKAEFDPKKIDQVLENIRASRATFEVVAEDRAVKMGDIAVINFEGFMGGAPLENGSGTDHHLELGAKQFIEGFEDGIVGMKKGETKTLSLKFPDPYHSAELAGKPVEFKVTLNQIKAKVLPELTNEFLATLGGPSDLETLKKSIQEDLEQTETKRIEDAFKNRLLKTLVKENPVEVPPSLMKEQKASLVEDFKKRMSEQGMGPDDFASYVEKWDGDFEKTAAEMIQSSFLVDAIAKKHDLFCKKEDLDAKFAEYAQQTGIEESRIKEFYGRPEQASRLTYMLTEEKVIAFLNKSVKVKEVPAGSLKEENH.

The 86-residue stretch at 163–248 folds into the PPIase FKBP-type domain; sequence GDIAVINFEG…LNQIKAKVLP (86 aa).

This sequence belongs to the FKBP-type PPIase family. Tig subfamily.

It localises to the cytoplasm. The catalysed reaction is [protein]-peptidylproline (omega=180) = [protein]-peptidylproline (omega=0). Its function is as follows. Involved in protein export. Acts as a chaperone by maintaining the newly synthesized protein in an open conformation. Functions as a peptidyl-prolyl cis-trans isomerase. The protein is Trigger factor of Bdellovibrio bacteriovorus (strain ATCC 15356 / DSM 50701 / NCIMB 9529 / HD100).